We begin with the raw amino-acid sequence, 317 residues long: MSNFAMSALCRVFTRGAPCGLSSCSSVTGLRDFCSGVSRLDRAGSDSMRTASPVNLTYDVFDGKGDSTPLVFLHGLFGSKSNFHSIAKSLVQRTGRKVLTIDARNHGKSPHSPVLTYDTMTSDLTHLLGQLHIGKCVLIGHSMGGKVAMTTALSQPNLVERLVVVDISPSLTSAHTNFHAYIQAMKEVKIPSDIPRSTARRLAEDQLRKIVKERSVRQFLLTNLEEQNGQYGWRINLESISNHLEDILGFPEFDTTYEGPTLFLGGSSSAYISSDDYPEIQRLFPCADIQYIPDASHWIHADKPLDFISSIITFLQP.

A mitochondrion-targeting transit peptide spans 1–20 (MSNFAMSALCRVFTRGAPCG). Positions 69-304 (PLVFLHGLFG…ASHWIHADKP (236 aa)) constitute an AB hydrolase-1 domain. Residues Ser-142, Glu-238, and His-297 each act as charge relay system in the active site.

This sequence belongs to the AB hydrolase superfamily. Phosphorylated.

The protein localises to the mitochondrion. It localises to the mitochondrion matrix. It carries out the reaction 1-octadecanoyl-2-(5Z,8Z,11Z,14Z-eicosatetraenoyl)-sn-glycerol + H2O = 2-(5Z,8Z,11Z,14Z-eicosatetraenoyl)-glycerol + octadecanoate + H(+). It catalyses the reaction a 1,2-diacyl-sn-glycerol + H2O = a 2-acylglycerol + a fatty acid + H(+). The enzyme catalyses a 1,3-diacyl-sn-glycerol + H2O = a 1-acyl-sn-glycerol + a fatty acid + H(+). The catalysed reaction is 1-octadecanoyl-2-(9Z-octadecenoyl)-sn-glycerol + H2O = 2-(9Z-octadecenoyl)-glycerol + octadecanoate + H(+). It carries out the reaction 1-octadecanoyl-2-(4Z,7Z,10Z,13Z,16Z,19Z-docosahexaenoyl)-sn-glycerol + H2O = 2-(4Z,7Z,10Z,13Z,16Z,19Z-docosahexaenoyl)-glycerol + octadecanoate + H(+). It catalyses the reaction 1,2-didecanoylglycerol + H2O = decanoylglycerol + decanoate + H(+). Its function is as follows. Catalyzes the hydrolysis of diacylglycerol in vitro and may function as a key regulator in lipid metabolism, namely by regulating the intracellular levels of diacylglycerol. 1,2-diacyl-sn-glycerols are the preferred substrate over 1,3-diacyl-sn-glycerols. The enzyme hydrolyzes stearate in preference to palmitate from the sn-1 position of 1,2-diacyl-sn-glycerols. The protein is sn-1-specific diacylglycerol lipase ABHD11 of Danio rerio (Zebrafish).